The following is a 384-amino-acid chain: L-cysteine:1D-myo-inositol 2-amino-2-deoxy-alpha-D-glucopyranoside ligase (384 aa).

Cys-16 is a binding site for Zn(2+). L-cysteinyl-5'-AMP-binding positions include 16-19, Thr-31, and 54-56; these read CGIT and NVT. The 'HIGH' region motif lies at 18-28; it reads ITPYDATHLGH. A 'ERGGDP' region motif is present at residues 159-164; the sequence is QSGGDP. An L-cysteinyl-5'-AMP-binding site is contributed by Trp-199. A Zn(2+)-binding site is contributed by Cys-203. 221–223 serves as a coordination point for L-cysteinyl-5'-AMP; it reads GSD. Residue His-228 participates in Zn(2+) binding. Ile-255 contacts L-cysteinyl-5'-AMP. Residues 261–265 carry the 'KMSKS' region motif; that stretch reads KMSKS.

The protein belongs to the class-I aminoacyl-tRNA synthetase family. MshC subfamily. Monomer. Zn(2+) is required as a cofactor.

The catalysed reaction is 1D-myo-inositol 2-amino-2-deoxy-alpha-D-glucopyranoside + L-cysteine + ATP = 1D-myo-inositol 2-(L-cysteinylamino)-2-deoxy-alpha-D-glucopyranoside + AMP + diphosphate + H(+). In terms of biological role, catalyzes the ATP-dependent condensation of GlcN-Ins and L-cysteine to form L-Cys-GlcN-Ins. The polypeptide is L-cysteine:1D-myo-inositol 2-amino-2-deoxy-alpha-D-glucopyranoside ligase (Mycobacterium leprae (strain Br4923)).